We begin with the raw amino-acid sequence, 566 residues long: Protein kintoun (566 aa).

3 disordered regions span residues 183–298 (KYKG…TAPQ), 399–467 (EEEE…AETG), and 493–552 (QLEE…ESRI). Over residues 208 to 290 (PQQTTGPQQP…HQPTDPQQTT (83 aa)) the composition is skewed to low complexity. Residues 399-424 (EEEERRAEEEESRKGGDEDGELHPDC) show a composition bias toward basic and acidic residues. Residues 440-467 (TPAADTHTPAADTHTPAADTHTPAAETG) show a composition bias toward low complexity. Over residues 535 to 550 (DPAHTDPAHTDPEMES) the composition is skewed to basic and acidic residues.

This sequence belongs to the PIH1 family. Kintoun subfamily.

The protein resides in the cytoplasm. It is found in the dynein axonemal particle. Functionally, required for cytoplasmic pre-assembly of axonemal dyneins, thereby playing a central role in motility in cilia and flagella. Involved in pre-assembly of dynein arm complexes in the cytoplasm before intraflagellar transport loads them for the ciliary compartment. This chain is Protein kintoun, found in Danio rerio (Zebrafish).